A 561-amino-acid polypeptide reads, in one-letter code: Glucose-6-phosphate isomerase (561 aa).

Catalysis depends on Glu-366, which acts as the Proton donor. Residues His-397 and Lys-525 contribute to the active site.

The protein belongs to the GPI family.

The protein localises to the cytoplasm. The enzyme catalyses alpha-D-glucose 6-phosphate = beta-D-fructose 6-phosphate. It functions in the pathway carbohydrate degradation; glycolysis; D-glyceraldehyde 3-phosphate and glycerone phosphate from D-glucose: step 2/4. This chain is Glucose-6-phosphate isomerase (gpi), found in Dictyostelium discoideum (Social amoeba).